A 238-amino-acid chain; its full sequence is LexA repressor (238 aa).

The H-T-H motif DNA-binding region spans 26-46 (FDEMKDALDLRSKSGIHRLIT). Residues Ser159 and Lys197 each act as for autocatalytic cleavage activity in the active site.

Belongs to the peptidase S24 family. As to quaternary structure, homodimer.

It carries out the reaction Hydrolysis of Ala-|-Gly bond in repressor LexA.. In terms of biological role, represses a number of genes involved in the response to DNA damage (SOS response), including recA and lexA. In the presence of single-stranded DNA, RecA interacts with LexA causing an autocatalytic cleavage which disrupts the DNA-binding part of LexA, leading to derepression of the SOS regulon and eventually DNA repair. The polypeptide is LexA repressor (Rhodobacter capsulatus (Rhodopseudomonas capsulata)).